We begin with the raw amino-acid sequence, 366 residues long: Mitogen-activated protein kinase 13 (366 aa).

Residues 25–308 enclose the Protein kinase domain; the sequence is YVSLTHIGSG…ASQALAHPFF (284 aa). 31 to 39 is a binding site for ATP; it reads IGSGAYGSV. Position 47 is a phosphoserine (Ser47). Lys54 is an ATP binding site. The active-site Proton acceptor is Asp150. Thr180 is modified (phosphothreonine; by MAP2K3, MAP2K4, MAP2K6 and MAP2K7). Residues 180–182 carry the TXY motif; it reads TGY. The residue at position 182 (Tyr182) is a Phosphotyrosine; by MAP2K3, MAP2K4, MAP2K6 and MAP2K7. Position 350 is a phosphoserine (Ser350).

The protein belongs to the protein kinase superfamily. CMGC Ser/Thr protein kinase family. MAP kinase subfamily. In terms of assembly, interacts with MAPK8IP2. Requires Mg(2+) as cofactor. Post-translationally, dually phosphorylated on Thr-180 and Tyr-182 by MAP2K3/MKK3, MAP2K4/MKK4, MAP2K6/MKK6 and MAP2K7/MKK7, which activates the enzyme. Dephosphorylated by dual specificity phosphatase DUSP1.

It carries out the reaction L-seryl-[protein] + ATP = O-phospho-L-seryl-[protein] + ADP + H(+). The catalysed reaction is L-threonyl-[protein] + ATP = O-phospho-L-threonyl-[protein] + ADP + H(+). Activated by phosphorylation on threonine and tyrosine by dual specificity kinases, MAP2K3/MKK3 MAP2K6/MKK6, MAP2K4/MKK4 and MAP2K7/MKK7. Activation by ultraviolet radiation, hyperosmotic shock, anisomycin or by TNF-alpha is mediated by MAP2K3/MKK3. Inhibited by dual specificity phosphatase DUSP1. Serine/threonine kinase which acts as an essential component of the MAP kinase signal transduction pathway. MAPK13 is one of the four p38 MAPKs which play an important role in the cascades of cellular responses evoked by extracellular stimuli such as pro-inflammatory cytokines or physical stress leading to direct activation of transcription factors such as ELK1 and ATF2. Accordingly, p38 MAPKs phosphorylate a broad range of proteins and it has been estimated that they may have approximately 200 to 300 substrates each. MAPK13 is one of the less studied p38 MAPK isoforms. Some of the targets are downstream kinases such as MAPKAPK2, which are activated through phosphorylation and further phosphorylate additional targets. Plays a role in the regulation of protein translation by phosphorylating and inactivating EEF2K. Involved in cytoskeletal remodeling through phosphorylation of MAPT and STMN1. Mediates UV irradiation induced up-regulation of the gene expression of CXCL14. Plays an important role in the regulation of epidermal keratinocyte differentiation, apoptosis and skin tumor development. Phosphorylates the transcriptional activator MYB in response to stress which leads to rapid MYB degradation via a proteasome-dependent pathway. MAPK13 also phosphorylates and down-regulates PRKD1 during regulation of insulin secretion in pancreatic beta cells. In Bos taurus (Bovine), this protein is Mitogen-activated protein kinase 13 (MAPK13).